A 291-amino-acid chain; its full sequence is 5-hydroxytryptamine receptor 1D (291 aa).

The helical transmembrane segment at 30–54 threads the bilayer; that stretch reads LCDIWLSSDITCCTASILHLCVIAL. Cysteines 31 and 108 form a disulfide. Residues aspartate 38 and cysteine 42 each coordinate serotonin. The DRY motif; important for ligand-induced conformation changes motif lies at 55-57; that stretch reads DRY. Residues 75–96 traverse the membrane as a helical segment; the sequence is AAAMIAIVWAISICISIPPLFW. Asparagine 111 carries an N-linked (GlcNAc...) asparagine glycan. The next 3 membrane-spanning stretches (helical) occupy residues 115–138, 221–246, and 256–279; these read ISYT…ILYG, KTLG…VLPI, and ALFD…YTVF. Position 241 (serine 241) interacts with serotonin. The short motif at 272–276 is the NPxxY motif; important for ligand-induced conformation changes and signaling element; the sequence is NPIIY.

The protein belongs to the G-protein coupled receptor 1 family. As to quaternary structure, homodimer. Heterodimer with HTR1B.

It localises to the cell membrane. G-protein coupled receptor for 5-hydroxytryptamine (serotonin). Also functions as a receptor for ergot alkaloid derivatives, various anxiolytic and antidepressant drugs and other psychoactive substances. Ligand binding causes a conformation change that triggers signaling via guanine nucleotide-binding proteins (G proteins) and modulates the activity of downstream effectors, such as adenylate cyclase. HTR1D is coupled to G(i)/G(o) G alpha proteins and mediates inhibitory neurotransmission by inhibiting adenylate cyclase activity. Regulates the release of 5-hydroxytryptamine in the brain, and thereby affects neural activity. May also play a role in regulating the release of other neurotransmitters. May play a role in vasoconstriction. The protein is 5-hydroxytryptamine receptor 1D (HTR1D) of Sus scrofa (Pig).